The sequence spans 367 residues: Peptide chain release factor 1 (367 aa).

Position 243 is an N5-methylglutamine (Gln243).

This sequence belongs to the prokaryotic/mitochondrial release factor family. Methylated by PrmC. Methylation increases the termination efficiency of RF1.

The protein localises to the cytoplasm. Its function is as follows. Peptide chain release factor 1 directs the termination of translation in response to the peptide chain termination codons UAG and UAA. In Acidovorax sp. (strain JS42), this protein is Peptide chain release factor 1.